A 202-amino-acid polypeptide reads, in one-letter code: ATP-dependent Clp protease proteolytic subunit (202 aa).

Residue Ser101 is the Nucleophile of the active site. The active site involves His126.

Belongs to the peptidase S14 family. As to quaternary structure, component of the chloroplastic Clp protease core complex.

Its subcellular location is the plastid. The protein localises to the chloroplast stroma. The catalysed reaction is Hydrolysis of proteins to small peptides in the presence of ATP and magnesium. alpha-casein is the usual test substrate. In the absence of ATP, only oligopeptides shorter than five residues are hydrolyzed (such as succinyl-Leu-Tyr-|-NHMec, and Leu-Tyr-Leu-|-Tyr-Trp, in which cleavage of the -Tyr-|-Leu- and -Tyr-|-Trp bonds also occurs).. Functionally, cleaves peptides in various proteins in a process that requires ATP hydrolysis. Has a chymotrypsin-like activity. Plays a major role in the degradation of misfolded proteins. This chain is ATP-dependent Clp protease proteolytic subunit, found in Buxus microphylla (Littleleaf boxwood).